We begin with the raw amino-acid sequence, 701 residues long: Rab-like protein 6 (701 aa).

At Met-1 the chain carries N-acetylmethionine. The interval 39-279 is small GTPase-like; that stretch reads GVQYNMKIVI…IFLEMMEARS (241 aa). Residues 50–57, 100–104, and 177–179 contribute to the GTP site; these read GDRNTGKT, DVVDK, and YRD. The disordered stretch occupies residues 279 to 701; sequence SRGHASPLTT…LRGGGDYEAL (423 aa). The segment covering 284 to 315 has biased composition (low complexity); it reads SPLTTSGQSPSSGSQSPVVPPSTVSTGSSSPS. Positions 316–344 are enriched in pro residues; the sequence is TPQPVLQPPLQAPPAPPAPAEAPPLPAAP. Phosphoserine occurs at positions 394, 416, 418, 461, and 462. Residues 495–506 are compositionally biased toward low complexity; sequence ALGPPRDAAPRA. Ser-552 is modified (phosphoserine). The segment covering 555–569 has biased composition (basic and acidic residues); it reads DAQRRAGEFPVREDL. At Ser-570 the chain carries Phosphoserine. Phosphothreonine is present on Thr-573. Pro residues predominate over residues 580 to 589; it reads VQPPAPPKPL. The segment covering 608 to 626 has biased composition (basic and acidic residues); sequence EPGREDSSEQDKEGRPPAK. Residues Ser-614 and Ser-615 each carry the phosphoserine modification. Residues 629–667 are interaction with CDKN2A; it reads KKKKKKGREEEDKAAKKRSKHKKSRERADDKGRDERRRR. The span at 643–653 shows a compositional bias: basic residues; that stretch reads AKKRSKHKKSR. A compositionally biased stretch (basic and acidic residues) spans 654-665; that stretch reads ERADDKGRDERR. Positions 683-701 are enriched in gly residues; sequence LGGGAPSGPLRGGGDYEAL.

Belongs to the small GTPase superfamily. Rab family.

Its subcellular location is the nucleus. It is found in the cytoplasm. May enhance cellular proliferation. May reduce growth inhibitory activity of CDKN2A. The chain is Rab-like protein 6 (RABL6) from Bos taurus (Bovine).